A 376-amino-acid polypeptide reads, in one-letter code: Chaperone protein DnaJ (376 aa).

Positions 5–70 (DFYEVLGVGR…DKKAAYDQFG (66 aa)) constitute a J domain. The segment at 132-210 (GLSKELRIPT…CHGEGRVEKS (79 aa)) adopts a CR-type zinc-finger fold. Residues C145, C148, C162, C165, C184, C187, C198, and C201 each contribute to the Zn(2+) site. 4 CXXCXGXG motif repeats span residues 145 to 152 (CEPCDGSG), 162 to 169 (CGTCHGQG), 184 to 191 (CPTCHGRG), and 198 to 205 (CNKCHGEG).

The protein belongs to the DnaJ family. Homodimer. It depends on Zn(2+) as a cofactor.

It is found in the cytoplasm. Participates actively in the response to hyperosmotic and heat shock by preventing the aggregation of stress-denatured proteins and by disaggregating proteins, also in an autonomous, DnaK-independent fashion. Unfolded proteins bind initially to DnaJ; upon interaction with the DnaJ-bound protein, DnaK hydrolyzes its bound ATP, resulting in the formation of a stable complex. GrpE releases ADP from DnaK; ATP binding to DnaK triggers the release of the substrate protein, thus completing the reaction cycle. Several rounds of ATP-dependent interactions between DnaJ, DnaK and GrpE are required for fully efficient folding. Also involved, together with DnaK and GrpE, in the DNA replication of plasmids through activation of initiation proteins. The polypeptide is Chaperone protein DnaJ (Shewanella piezotolerans (strain WP3 / JCM 13877)).